The primary structure comprises 119 residues: Large ribosomal subunit protein uL18 (119 aa).

Belongs to the universal ribosomal protein uL18 family. Part of the 50S ribosomal subunit; part of the 5S rRNA/L5/L18/L25 subcomplex. Contacts the 5S and 23S rRNAs.

Functionally, this is one of the proteins that bind and probably mediate the attachment of the 5S RNA into the large ribosomal subunit, where it forms part of the central protuberance. The protein is Large ribosomal subunit protein uL18 of Borrelia hermsii (strain HS1 / DAH).